The primary structure comprises 67 residues: MSVLPVFVMFGLSFPPVFIELIISLMLFWLVKRVLTPSGIYDLVWHPALFNTALYCCVFYLVSRLLV.

2 helical membrane passes run 3-23 (VLPVFVMFGLSFPPVFIELII) and 43-63 (LVWHPALFNTALYCCVFYLVS).

Belongs to the AaeX family.

It is found in the cell membrane. This chain is Protein AaeX, found in Pantoea vagans (strain C9-1) (Pantoea agglomerans (strain C9-1)).